Consider the following 252-residue polypeptide: MNKVVVKNVTFGEGAPKICVPMVGKTVAALKEEAEMLKTIDLDVVEWRVDFYEDVKDLAKVETALDEIRVVLPETPILFTFRSAKEGGELAVSDEFYFELNETLARTGKIDLVDVELFNEEADVLRLIETAHKHDVKVVMSNHDFDKTPAKEEIVSRLTRMEALGADLPKIAVMPKSATDVLTLLDATNTVSEKADQPIITMSMAGTGVISRLAGEVFGSAMTFGAAKKASAPGQIDVNELRHVLDLLHKQF.

3-dehydroquinate-binding positions include 46–48 and arginine 82; that span reads EWR. The active-site Proton donor/acceptor is histidine 143. Lysine 170 functions as the Schiff-base intermediate with substrate in the catalytic mechanism. Residues arginine 212, serine 231, and glutamine 235 each coordinate 3-dehydroquinate.

It belongs to the type-I 3-dehydroquinase family. As to quaternary structure, homodimer.

It carries out the reaction 3-dehydroquinate = 3-dehydroshikimate + H2O. It participates in metabolic intermediate biosynthesis; chorismate biosynthesis; chorismate from D-erythrose 4-phosphate and phosphoenolpyruvate: step 3/7. In terms of biological role, involved in the third step of the chorismate pathway, which leads to the biosynthesis of aromatic amino acids. Catalyzes the cis-dehydration of 3-dehydroquinate (DHQ) and introduces the first double bond of the aromatic ring to yield 3-dehydroshikimate. The protein is 3-dehydroquinate dehydratase of Listeria welshimeri serovar 6b (strain ATCC 35897 / DSM 20650 / CCUG 15529 / CIP 8149 / NCTC 11857 / SLCC 5334 / V8).